A 291-amino-acid chain; its full sequence is ATP synthase gamma chain (291 aa).

It belongs to the ATPase gamma chain family. As to quaternary structure, F-type ATPases have 2 components, CF(1) - the catalytic core - and CF(0) - the membrane proton channel. CF(1) has five subunits: alpha(3), beta(3), gamma(1), delta(1), epsilon(1). CF(0) has three main subunits: a, b and c.

It is found in the cell inner membrane. In terms of biological role, produces ATP from ADP in the presence of a proton gradient across the membrane. The gamma chain is believed to be important in regulating ATPase activity and the flow of protons through the CF(0) complex. This is ATP synthase gamma chain from Burkholderia thailandensis (strain ATCC 700388 / DSM 13276 / CCUG 48851 / CIP 106301 / E264).